Consider the following 121-residue polypeptide: Succinate dehydrogenase assembly factor 3, mitochondrial (121 aa).

A mitochondrion-targeting transit peptide spans 1–35 (MRPSLVRLVRPRRPERKTSPILPPLKLYKALLRAH).

The protein belongs to the complex I LYR family. SDHAF3 subfamily. In terms of assembly, interacts with the iron-sulfur protein subunit within the SDH catalytic dimer.

Its subcellular location is the mitochondrion matrix. In terms of biological role, plays an essential role in the assembly of succinate dehydrogenase (SDH), an enzyme complex (also referred to as respiratory complex II) that is a component of both the tricarboxylic acid (TCA) cycle and the mitochondrial electron transport chain, and which couples the oxidation of succinate to fumarate with the reduction of ubiquinone (coenzyme Q) to ubiquinol. Promotes maturation of the iron-sulfur protein subunit of the SDH catalytic dimer, protecting it from the deleterious effects of oxidants. May act together with SDHAF1. This is Succinate dehydrogenase assembly factor 3, mitochondrial from Debaryomyces hansenii (strain ATCC 36239 / CBS 767 / BCRC 21394 / JCM 1990 / NBRC 0083 / IGC 2968) (Yeast).